We begin with the raw amino-acid sequence, 302 residues long: Aquaporin NIP3-1 (302 aa).

The segment at Met1 to Asp31 is disordered. Residues Pro7–Pro21 show a composition bias toward low complexity. The next 2 helical transmembrane spans lie at Leu76 to Val96 and Gly102 to Leu122. The short motif at Asn133–Ser135 is the NPA 1 element. Helical transmembrane passes span Leu149 to Leu169, Ala193 to Thr213, and Ala217 to Ala237. An NPA 2 motif is present at residues Asn246–Val248. Residues Trp264 to Val284 traverse the membrane as a helical segment.

It belongs to the MIP/aquaporin (TC 1.A.8) family. NIP (TC 1.A.8.12) subfamily.

The protein resides in the membrane. In terms of biological role, aquaporins facilitate the transport of water and small neutral solutes across cell membranes. This chain is Aquaporin NIP3-1 (NIP3-1), found in Zea mays (Maize).